The sequence spans 491 residues: 1-aminocyclopropane-1-carboxylate synthase (491 aa).

Lysine 278 carries the N6-(pyridoxal phosphate)lysine modification.

Belongs to the class-I pyridoxal-phosphate-dependent aminotransferase family. In terms of assembly, homodimer. It depends on pyridoxal 5'-phosphate as a cofactor.

It carries out the reaction S-adenosyl-L-methionine = 1-aminocyclopropane-1-carboxylate + S-methyl-5'-thioadenosine + H(+). It functions in the pathway alkene biosynthesis; ethylene biosynthesis via S-adenosyl-L-methionine; ethylene from S-adenosyl-L-methionine: step 1/2. In terms of biological role, catalyzes the formation of 1-aminocyclopropane-1-carboxylate, a direct precursor of ethylene in higher plants. This chain is 1-aminocyclopropane-1-carboxylate synthase (ACS1), found in Nicotiana tabacum (Common tobacco).